The primary structure comprises 274 residues: NH(3)-dependent NAD(+) synthetase (274 aa).

Position 46–53 (46–53 (GISGGQDS)) interacts with ATP. Residue aspartate 52 participates in Mg(2+) binding. Residue arginine 140 coordinates deamido-NAD(+). Threonine 160 serves as a coordination point for ATP. Glutamate 165 is a Mg(2+) binding site. The deamido-NAD(+) site is built by lysine 173 and aspartate 180. ATP-binding residues include lysine 189 and threonine 211. 260-261 (HK) is a deamido-NAD(+) binding site.

This sequence belongs to the NAD synthetase family. Homodimer.

The catalysed reaction is deamido-NAD(+) + NH4(+) + ATP = AMP + diphosphate + NAD(+) + H(+). It participates in cofactor biosynthesis; NAD(+) biosynthesis; NAD(+) from deamido-NAD(+) (ammonia route): step 1/1. Catalyzes the ATP-dependent amidation of deamido-NAD to form NAD. Uses ammonia as a nitrogen source. This chain is NH(3)-dependent NAD(+) synthetase, found in Streptococcus pneumoniae serotype 2 (strain D39 / NCTC 7466).